The chain runs to 465 residues: tRNA (guanine(37)-N(1))-methyltransferase (465 aa).

A mitochondrion-targeting transit peptide spans 1-20; that stretch reads MDKNSQLRDMNLFRAPAARA. S-adenosyl-L-methionine-binding positions include His-238 and 304–305; that span reads DG. Residues 326 to 345 are disordered; sequence AVIKPPRPPRKSAAPPPEPV. Residue Asn-359 coordinates S-adenosyl-L-methionine.

This sequence belongs to the class I-like SAM-binding methyltransferase superfamily. TRM5/TYW2 family. As to quaternary structure, monomer.

The protein resides in the mitochondrion matrix. It is found in the nucleus. It localises to the cytoplasm. It carries out the reaction guanosine(37) in tRNA + S-adenosyl-L-methionine = N(1)-methylguanosine(37) in tRNA + S-adenosyl-L-homocysteine + H(+). Its function is as follows. Specifically methylates the N1 position of guanosine-37 in various cytoplasmic and mitochondrial tRNAs. Methylation is not dependent on the nature of the nucleoside 5' of the target nucleoside. This is the first step in the biosynthesis of wybutosine (yW), a modified base adjacent to the anticodon of tRNAs and required for accurate decoding. In Fusarium vanettenii (strain ATCC MYA-4622 / CBS 123669 / FGSC 9596 / NRRL 45880 / 77-13-4) (Fusarium solani subsp. pisi), this protein is tRNA (guanine(37)-N(1))-methyltransferase.